A 126-amino-acid polypeptide reads, in one-letter code: Small ribosomal subunit protein uS13 (126 aa).

The segment at 95-126 (GLPVRGQRTHTNARTRKGPRKTVAGKKKPGKK) is disordered.

This sequence belongs to the universal ribosomal protein uS13 family. In terms of assembly, part of the 30S ribosomal subunit. Forms a loose heterodimer with protein S19. Forms two bridges to the 50S subunit in the 70S ribosome.

Functionally, located at the top of the head of the 30S subunit, it contacts several helices of the 16S rRNA. In the 70S ribosome it contacts the 23S rRNA (bridge B1a) and protein L5 of the 50S subunit (bridge B1b), connecting the 2 subunits; these bridges are implicated in subunit movement. Contacts the tRNAs in the A and P-sites. This chain is Small ribosomal subunit protein uS13, found in Acidothermus cellulolyticus (strain ATCC 43068 / DSM 8971 / 11B).